An 846-amino-acid polypeptide reads, in one-letter code: Cap-specific mRNA (nucleoside-2'-O-)-methyltransferase 1 (846 aa).

The interval 1 to 81 (MKRKSDSEQQ…LPDTLAEGSS (81 aa)) is disordered. Positions 2 to 20 (KRKSDSEQQPSVQCRKKKR) match the Bipartite nuclear localization signal motif. Residues 27-45 (NLSSTSDDDTQYSNHGTQE) show a composition bias toward polar residues. In terms of domain architecture, G-patch spans 87 to 133 (YNSVSQKLMAKMGFREGEGLGKFGQGRKEIVETSKQKGRRGLGMVLK). Substrate contacts are provided by residues 203–207 (KSAFD) and Arg-218. The RrmJ-type SAM-dependent 2'-O-MTase domain occupies 231–450 (FFLNRAAMKM…ERYVVCRGLK (220 aa)). Asn-234 is an S-adenosyl-L-methionine binding site. Lys-239 is an active-site residue. S-adenosyl-L-methionine-binding positions include 277–283 (CAGPGGF) and 335–336 (DV). Asp-364 is an active-site residue. 374 to 376 (NIQ) provides a ligand contact to substrate. Lys-404 acts as the Proton acceptor in catalysis. Substrate is bound at residue Asn-439. Residues 752-786 (KTINEPWSMAYSKSQKRKYFYNSKTKNSQFELPVE) enclose the WW domain.

The protein localises to the nucleus. The enzyme catalyses a 5'-end (N(7)-methyl 5'-triphosphoguanosine)-ribonucleoside in mRNA + S-adenosyl-L-methionine = a 5'-end (N(7)-methyl 5'-triphosphoguanosine)-(2'-O-methyl-ribonucleoside) in mRNA + S-adenosyl-L-homocysteine + H(+). S-adenosyl-L-methionine-dependent methyltransferase that mediates mRNA cap1 2'-O-ribose methylation to the 5'-cap structure of mRNAs. Methylates the ribose of the first nucleotide of a m(7)GpppG-capped mRNA and small nuclear RNA (snRNA) to produce m(7)GpppRm (cap1). Displays a preference for cap0 transcripts. Cap1 modification is linked to higher levels of translation. May be involved in the interferon response pathway. The protein is Cap-specific mRNA (nucleoside-2'-O-)-methyltransferase 1 (cmtr1) of Xenopus laevis (African clawed frog).